We begin with the raw amino-acid sequence, 385 residues long: GDP-D-glucose phosphorylase 1 (385 aa).

Histidine 218 serves as the catalytic Tele-GMP-histidine intermediate.

Belongs to the GDPGP1 family.

It is found in the cytoplasm. It catalyses the reaction GDP-alpha-D-glucose + phosphate = alpha-D-glucose 1-phosphate + GDP + H(+). Its function is as follows. Specific and highly efficient GDP-D-glucose phosphorylase regulating the levels of GDP-D-glucose in cells. This Bos taurus (Bovine) protein is GDP-D-glucose phosphorylase 1 (GDPGP1).